The chain runs to 91 residues: Mercuric transport protein periplasmic component (91 aa).

The N-terminal stretch at 1–19 (MKKLLSALALAAVVAPVWA) is a signal peptide. Positions 22 to 88 (QTVTLSVPGM…ATEDAGYPSS (67 aa)) constitute an HMA domain. Hg(2+) contacts are provided by Cys-33 and Cys-36.

Belongs to the MerP family. Monomer.

Its subcellular location is the periplasm. In terms of biological role, involved in mercury resistance. Acts as a mercury scavenger that specifically binds to a mercuric ion in the periplasm and probably passes it to the cytoplasmic mercuric reductase MerA via the mercuric transport protein MerT. This Pseudomonas fluorescens protein is Mercuric transport protein periplasmic component.